Consider the following 372-residue polypeptide: NAD(P)H-quinone oxidoreductase subunit 1 (372 aa).

9 consecutive transmembrane segments (helical) span residues 27–47 (AIWM…GVLV), 65–85 (PEYI…KLVF), 97–117 (WLFT…YLIV), 128–148 (VGTG…GLLM), 166–186 (AAQS…IVMM), 204–224 (ILGW…IAAL), 266–286 (ILSA…PIPI), 308–328 (ALGI…AILL), and 347–367 (FLLP…LAFP).

It belongs to the complex I subunit 1 family. In terms of assembly, NDH-1 is composed of at least 11 different subunits.

The protein resides in the cellular thylakoid membrane. The catalysed reaction is a plastoquinone + NADH + (n+1) H(+)(in) = a plastoquinol + NAD(+) + n H(+)(out). It catalyses the reaction a plastoquinone + NADPH + (n+1) H(+)(in) = a plastoquinol + NADP(+) + n H(+)(out). NDH-1 shuttles electrons from an unknown electron donor, via FMN and iron-sulfur (Fe-S) centers, to quinones in the respiratory and/or the photosynthetic chain. The immediate electron acceptor for the enzyme in this species is believed to be plastoquinone. Couples the redox reaction to proton translocation, and thus conserves the redox energy in a proton gradient. The protein is NAD(P)H-quinone oxidoreductase subunit 1 of Nostoc sp. (strain PCC 7120 / SAG 25.82 / UTEX 2576).